The chain runs to 501 residues: Aldehyde dehydrogenase, cytosolic 1 (501 aa).

N-acetylserine is present on serine 2. N6-acetyllysine is present on residues lysine 91 and lysine 128. 246 to 251 (GSTEVG) is a binding site for NAD(+). Lysine 252 is subject to N6-acetyllysine. Glutamate 269 serves as the catalytic Proton acceptor. Residue cysteine 303 is the Nucleophile of the active site. Lysine 353, lysine 367, and lysine 410 each carry N6-acetyllysine. At serine 413 the chain carries Phosphoserine. Residues lysine 419, lysine 435, and lysine 495 each carry the N6-acetyllysine modification.

Belongs to the aldehyde dehydrogenase family. In terms of assembly, homotetramer. In terms of tissue distribution, very low levels in lung and liver.

The protein resides in the cytoplasm. The catalysed reaction is an aldehyde + NAD(+) + H2O = a carboxylate + NADH + 2 H(+). Its pathway is alcohol metabolism; ethanol degradation; acetate from ethanol: step 2/2. Can oxidize benzaldehyde, propionaldehyde and acetaldehyde. No detectable activity with retinal. The protein is Aldehyde dehydrogenase, cytosolic 1 (Aldh1a7) of Rattus norvegicus (Rat).